A 1745-amino-acid polypeptide reads, in one-letter code: ADAMTS-like protein 1 (1745 aa).

An N-terminal signal peptide occupies residues M1 to S28. The TSP type-1 1 domain maps to E33–P82. 3 disulfide bridges follow: C45-C76, C49-C81, and C60-C66. N251 carries N-linked (GlcNAc...) asparagine glycosylation. S310 and S391 each carry an O-linked (Fuc...) serine glycan. 6 TSP type-1 domains span residues P376–P424, D436–Y493, E522–N584, E607–P667, C703–D762, and C763–A825. O-linked (Fuc...) threonine glycosylation occurs at T451. 3 disulfide bridges follow: C534–C578, C538–C583, and C549–C567. 4 disulfide bridges follow: C775/C819, C779/C824, C790/C807, and C874/C922. Positions P836 to G938 constitute an Ig-like C2-type 1 domain. 2 disordered regions span residues E966–A991 and V1114–R1137. Over residues S1115–G1126 the composition is skewed to low complexity. 3 Ig-like C2-type domains span residues P1139 to T1241, P1261 to L1352, and P1378 to V1468. Intrachain disulfides connect C1177–C1225, C1283–C1336, and C1401–C1452. TSP type-1 domains are found at residues C1528–V1591 and C1649–E1709. Residues E1709–A1745 enclose the PLAC domain.

As to quaternary structure, monomer. In terms of processing, glycosylated. O-fucosylated by POFUT2 on a serine or a threonine residue found within the consensus sequence C1-X(2)-(S/T)-C2-G of the TSP type-1 repeat domains where C1 and C2 are the first and second cysteine residue of the repeat, respectively. Fucosylated repeats can then be further glycosylated by the addition of a beta-1,3-glucose residue by the glucosyltransferase, B3GALTL. Fucosylation mediates the efficient secretion of ADAMTS family members. Can also be C-glycosylated with one or two mannose molecules on tryptophan residues within the consensus sequence W-X-X-W of the TPRs, and N-glycosylated. These other glycosylations can also facilitate secretion. Post-translationally, disulfide bonds are present.

It localises to the secreted. It is found in the extracellular space. The protein resides in the extracellular matrix. The chain is ADAMTS-like protein 1 (Adamtsl1) from Mus musculus (Mouse).